We begin with the raw amino-acid sequence, 492 residues long: Pre-mRNA-processing factor 19 (492 aa).

In terms of domain architecture, U-box spans Met1 to Ile72. WD repeat units follow at residues His207 to Thr246, Gly249 to Ile288, Val291 to Lys330, Gly336 to Ala375, Gly378 to Thr417, and Asp461 to Ser491.

The protein belongs to the WD repeat PRP19 family. As to quaternary structure, homotetramer. Component of the NTC complex (or PRP19-associated complex) which is associated with the spliceosome.

The protein localises to the nucleus. The protein resides in the nucleoplasm. It catalyses the reaction S-ubiquitinyl-[E2 ubiquitin-conjugating enzyme]-L-cysteine + [acceptor protein]-L-lysine = [E2 ubiquitin-conjugating enzyme]-L-cysteine + N(6)-ubiquitinyl-[acceptor protein]-L-lysine.. It functions in the pathway protein modification; protein ubiquitination. Functionally, probable ubiquitin-protein ligase which is mainly involved pre-mRNA splicing and DNA repair. Core component of the NTC/Nineteen complex which is part of the spliceosome and participates in its assembly, its remodeling and is required for its activity. Together with emb-4, necessary for interaction of rnp-4, a probable exon junction complex component, with mRNAs and spliceosomal snRNAs. Plays a role in nuclear retention of unspliced mRNAs. In Caenorhabditis elegans, this protein is Pre-mRNA-processing factor 19 (prp-19).